The chain runs to 469 residues: Glutamate--tRNA ligase (469 aa).

The short motif at 9-19 (PSPTGFLHVGG) is the 'HIGH' region element. Positions 236–240 (KLSKR) match the 'KMSKS' region motif. Position 239 (lysine 239) interacts with ATP.

Belongs to the class-I aminoacyl-tRNA synthetase family. Glutamate--tRNA ligase type 1 subfamily. As to quaternary structure, monomer.

It is found in the cytoplasm. The enzyme catalyses tRNA(Glu) + L-glutamate + ATP = L-glutamyl-tRNA(Glu) + AMP + diphosphate. Its function is as follows. Catalyzes the attachment of glutamate to tRNA(Glu) in a two-step reaction: glutamate is first activated by ATP to form Glu-AMP and then transferred to the acceptor end of tRNA(Glu). This chain is Glutamate--tRNA ligase, found in Shewanella frigidimarina (strain NCIMB 400).